The following is a 376-amino-acid chain: Phospho-N-acetylmuramoyl-pentapeptide-transferase (376 aa).

Transmembrane regions (helical) follow at residues Arg-28–Ile-48, Thr-76–Leu-96, Phe-100–Phe-120, Tyr-135–Ala-155, Tyr-179–Thr-199, Gly-211–Val-231, Ala-252–Tyr-272, Val-279–Phe-299, Ile-307–Phe-327, and Lys-353–Met-373.

Belongs to the glycosyltransferase 4 family. MraY subfamily. Requires Mg(2+) as cofactor.

The protein resides in the cell inner membrane. It catalyses the reaction UDP-N-acetyl-alpha-D-muramoyl-L-alanyl-gamma-D-glutamyl-meso-2,6-diaminopimeloyl-D-alanyl-D-alanine + di-trans,octa-cis-undecaprenyl phosphate = di-trans,octa-cis-undecaprenyl diphospho-N-acetyl-alpha-D-muramoyl-L-alanyl-D-glutamyl-meso-2,6-diaminopimeloyl-D-alanyl-D-alanine + UMP. It participates in cell wall biogenesis; peptidoglycan biosynthesis. In terms of biological role, catalyzes the initial step of the lipid cycle reactions in the biosynthesis of the cell wall peptidoglycan: transfers peptidoglycan precursor phospho-MurNAc-pentapeptide from UDP-MurNAc-pentapeptide onto the lipid carrier undecaprenyl phosphate, yielding undecaprenyl-pyrophosphoryl-MurNAc-pentapeptide, known as lipid I. This chain is Phospho-N-acetylmuramoyl-pentapeptide-transferase, found in Sorangium cellulosum (strain So ce56) (Polyangium cellulosum (strain So ce56)).